A 302-amino-acid chain; its full sequence is Bifunctional protein FolD (302 aa).

NADP(+)-binding positions include Gly-165–Ser-167, Ser-190, and Ile-231.

Belongs to the tetrahydrofolate dehydrogenase/cyclohydrolase family. As to quaternary structure, homodimer.

The catalysed reaction is (6R)-5,10-methylene-5,6,7,8-tetrahydrofolate + NADP(+) = (6R)-5,10-methenyltetrahydrofolate + NADPH. It carries out the reaction (6R)-5,10-methenyltetrahydrofolate + H2O = (6R)-10-formyltetrahydrofolate + H(+). It functions in the pathway one-carbon metabolism; tetrahydrofolate interconversion. Its function is as follows. Catalyzes the oxidation of 5,10-methylenetetrahydrofolate to 5,10-methenyltetrahydrofolate and then the hydrolysis of 5,10-methenyltetrahydrofolate to 10-formyltetrahydrofolate. The protein is Bifunctional protein FolD of Prochlorococcus marinus (strain MIT 9211).